Here is an 89-residue protein sequence, read N- to C-terminus: Co-chaperonin GroES (89 aa).

The protein belongs to the GroES chaperonin family. As to quaternary structure, heptamer of 7 subunits arranged in a ring. Interacts with the chaperonin GroEL.

It localises to the cytoplasm. Its function is as follows. Together with the chaperonin GroEL, plays an essential role in assisting protein folding. The GroEL-GroES system forms a nano-cage that allows encapsulation of the non-native substrate proteins and provides a physical environment optimized to promote and accelerate protein folding. GroES binds to the apical surface of the GroEL ring, thereby capping the opening of the GroEL channel. This Fervidobacterium nodosum (strain ATCC 35602 / DSM 5306 / Rt17-B1) protein is Co-chaperonin GroES.